Here is a 258-residue protein sequence, read N- to C-terminus: Regulatory protein RecX (258 aa).

This sequence belongs to the RecX family.

The protein resides in the cytoplasm. In terms of biological role, modulates RecA activity. The protein is Regulatory protein RecX of Streptococcus gordonii (strain Challis / ATCC 35105 / BCRC 15272 / CH1 / DL1 / V288).